The following is a 147-amino-acid chain: Hemoglobin subunit beta (147 aa).

A Globin domain is found at 3–147; that stretch reads EWTDKERSII…VVSALGKQYH (145 aa). 2 residues coordinate heme b: His-64 and His-93.

It belongs to the globin family. In terms of assembly, heterotetramer of two alpha chains and two beta chains. In terms of tissue distribution, red blood cells.

Its function is as follows. Involved in oxygen transport from gills to the various peripheral tissues. This chain is Hemoglobin subunit beta (hbb), found in Trematomus hansoni (Striped rockcod).